A 1164-amino-acid polypeptide reads, in one-letter code: Shugoshin 2A (1164 aa).

A coiled-coil region spans residues 62 to 113 (LSKEKENSRRITTEKMQLQKEVEKLNFENTFLRLKLNTLNKKLVEIESHVSN). Disordered regions lie at residues 160-269 (SEND…VTMR), 287-314 (HQPT…NTQR), 390-492 (RKVK…PFSR), 521-541 (TFVI…DKDT), and 917-992 (PLDS…ETHG). The span at 182 to 198 (SKTSPDSTSSVSRQPSS) shows a compositional bias: low complexity. Composition is skewed to polar residues over residues 238–247 (DQSPKSSLSE) and 288–299 (QPTSSPGSNWNN). Residues 390-412 (RKVKGASSDKKRESSKRECKDGS) show a composition bias toward basic and acidic residues. Positions 443-472 (CISSTEQPSQVNTQKKRTLQNSSDQENIQN) are enriched in polar residues. Residues 525–541 (RKSEKDNLFPNQEDKDT) are compositionally biased toward basic and acidic residues. The span at 934–948 (GEQTNLPKMQKQSAG) shows a compositional bias: polar residues. S1042 bears the Phosphoserine mark. The tract at residues 1092–1164 (ITTGTRNPHH…EPSLRSKMRR (73 aa)) is disordered. Over residues 1112–1125 (TSLVLVDTSSVSDT) the composition is skewed to low complexity. Residues 1126–1140 (NPANPENESEGQSSH) show a composition bias toward polar residues.

It belongs to the shugoshin family. As to quaternary structure, part of an astrin (SPAG5)-kinastrin (SKAP) complex containing KNSTRN, SPAG5, PLK1, DYNLL1 and SGO2A. Interacts with CDCA8. Interacts with PPP2CA. Ubiquitously expressed in proliferating cells. Highly expressed in the testis and oocytes.

The protein localises to the nucleus. It is found in the chromosome. Its subcellular location is the centromere. The protein resides in the kinetochore. Functionally, cooperates with PPP2CA to protect centromeric cohesin from separase-mediated cleavage in oocytes specifically during meiosis I. Has a crucial role in protecting REC8 at centromeres from cleavage by separase. During meiosis, protects centromeric cohesion complexes until metaphase II/anaphase II transition, preventing premature release of meiosis-specific REC8 cohesin complexes from anaphase I centromeres. Is thus essential for an accurate gametogenesis. May act by targeting PPP2CA to centromeres, thus leading to cohesin dephosphorylation. Essential for recruiting KIF2C to the inner centromere and for correcting defective kinetochore attachments. Involved in centromeric enrichment of AUKRB in prometaphase. The sequence is that of Shugoshin 2A from Mus musculus (Mouse).